Here is a 343-residue protein sequence, read N- to C-terminus: Anthranilate phosphoribosyltransferase (343 aa).

Residues glycine 84, 87–88, threonine 92, 94–97, 112–120, and serine 124 each bind 5-phospho-alpha-D-ribose 1-diphosphate; these read GD, NIST, and KHGNRGVSS. Position 84 (glycine 84) interacts with anthranilate. Position 96 (serine 96) interacts with Mg(2+). Position 115 (asparagine 115) interacts with anthranilate. Arginine 170 contributes to the anthranilate binding site. 2 residues coordinate Mg(2+): aspartate 229 and glutamate 230.

Belongs to the anthranilate phosphoribosyltransferase family. In terms of assembly, homodimer. Requires Mg(2+) as cofactor.

The enzyme catalyses N-(5-phospho-beta-D-ribosyl)anthranilate + diphosphate = 5-phospho-alpha-D-ribose 1-diphosphate + anthranilate. Its pathway is amino-acid biosynthesis; L-tryptophan biosynthesis; L-tryptophan from chorismate: step 2/5. Its function is as follows. Catalyzes the transfer of the phosphoribosyl group of 5-phosphorylribose-1-pyrophosphate (PRPP) to anthranilate to yield N-(5'-phosphoribosyl)-anthranilate (PRA). This chain is Anthranilate phosphoribosyltransferase, found in Burkholderia multivorans (strain ATCC 17616 / 249).